The following is a 344-amino-acid chain: Homoserine O-acetyltransferase (344 aa).

Cysteine 142 (acyl-thioester intermediate) is an active-site residue. Substrate contacts are provided by lysine 163 and serine 192. Histidine 235 (proton acceptor) is an active-site residue. The active site involves glutamate 237. Arginine 249 contacts substrate.

It belongs to the MetA family.

It localises to the cytoplasm. The catalysed reaction is L-homoserine + acetyl-CoA = O-acetyl-L-homoserine + CoA. The protein operates within amino-acid biosynthesis; L-methionine biosynthesis via de novo pathway; O-acetyl-L-homoserine from L-homoserine: step 1/1. In terms of biological role, transfers an acetyl group from acetyl-CoA to L-homoserine, forming acetyl-L-homoserine. This chain is Homoserine O-acetyltransferase, found in Bifidobacterium adolescentis (strain ATCC 15703 / DSM 20083 / NCTC 11814 / E194a).